Consider the following 101-residue polypeptide: Small ribosomal subunit protein uS14 (101 aa).

The protein belongs to the universal ribosomal protein uS14 family. Part of the 30S ribosomal subunit. Contacts proteins S3 and S10.

Its function is as follows. Binds 16S rRNA, required for the assembly of 30S particles and may also be responsible for determining the conformation of the 16S rRNA at the A site. This is Small ribosomal subunit protein uS14 from Anaplasma phagocytophilum (strain HZ).